Here is a 125-residue protein sequence, read N- to C-terminus: Glycine cleavage system H protein (125 aa).

In terms of domain architecture, Lipoyl-binding spans 19–101 (VGTVGISDYA…EGAAWFFKLT (83 aa)). The residue at position 60 (Lys-60) is an N6-lipoyllysine.

Belongs to the GcvH family. As to quaternary structure, the glycine cleavage system is composed of four proteins: P, T, L and H. (R)-lipoate serves as cofactor.

The glycine cleavage system catalyzes the degradation of glycine. The H protein shuttles the methylamine group of glycine from the P protein to the T protein. The sequence is that of Glycine cleavage system H protein from Paramagnetospirillum magneticum (strain ATCC 700264 / AMB-1) (Magnetospirillum magneticum).